The sequence spans 321 residues: Mas-related G-protein coupled receptor member B4 (321 aa).

Topologically, residues 1–33 (MGTTTLAWNINNTAENGSYTEMFSCITKFNTLN) are extracellular. N-linked (GlcNAc...) asparagine glycans are attached at residues Asn-11 and Asn-16. A helical transmembrane segment spans residues 34–54 (FLTVIIAVVGLAGNGIVLWLL). The Cytoplasmic segment spans residues 55 to 62 (AFHLHRNA). A helical membrane pass occupies residues 63–83 (FSVYVLNLAGADFLYLFTQVV). Residues 84–97 (HSLECVLQLDNNSF) are Extracellular-facing. N-linked (GlcNAc...) asparagine glycosylation is present at Asn-94. Residues 98–118 (YILLIVTMFAYLAGLCMIAAI) traverse the membrane as a helical segment. Residues 119–146 (SAERCLSVMWPIWYHCQRPRHTSAIMCA) are Cytoplasmic-facing. Residues 147-167 (LVWVSSLLLSLVVGLGCGFLF) traverse the membrane as a helical segment. Residues 168 to 172 (SYYDY) lie on the Extracellular side of the membrane. Residues 173–193 (YFCITLNFITAAFLIVLSVVL) form a helical membrane-spanning segment. The Cytoplasmic portion of the chain corresponds to 194–215 (SVSSLALLVKIVWGSHRIPVTR). Residues 216–236 (FFVTIALTVVVFIYFGMPFGI) form a helical membrane-spanning segment. Residues 237–257 (CWFLLSRIMEFDSIFFNNVYE) lie on the Extracellular side of the membrane. The chain crosses the membrane as a helical span at residues 258 to 278 (IIEFLSCVNSCANPIIYFLVG). The Cytoplasmic portion of the chain corresponds to 279–321 (SIRQHRLRWQSLKLLLQRAMQDTPEEESGERGPSQRSGELETV). The interval 299 to 321 (QDTPEEESGERGPSQRSGELETV) is disordered.

It belongs to the G-protein coupled receptor 1 family. Mas subfamily.

The protein localises to the membrane. Its function is as follows. Orphan receptor. Probably involved in the function of nociceptive neurons. May regulate nociceptor function and/or development, including the sensation or modulation of pain. This is Mas-related G-protein coupled receptor member B4 (Mrgprb4) from Mus musculus (Mouse).